The sequence spans 692 residues: Protein artemis (692 aa).

Thr-380 is subject to Phosphothreonine. Position 385 is a phosphoserine (Ser-385). Disordered stretches follow at residues 503–555 (RLEN…DSQS) and 640–660 (STNADSQSSSDFEVPSTPEAE). Residues 507–520 (FPSSTEAGGSQSPK) are compositionally biased toward polar residues. Over residues 530-543 (THISSQNSSQSTHI) the composition is skewed to low complexity. Polar residues-rich tracts occupy residues 544–555 (TEQGSQGWDSQS) and 640–650 (STNADSQSSSD). Ser-645 bears the Phosphoserine; by ATM mark.

The protein belongs to the DNA repair metallo-beta-lactamase (DRMBL) family. Interacts with LIG4; the interaction is direct. Interacts with ATM. Interacts with BRCA1. Interacts with PRKDC. Interacts with TP53BP1. Also exhibits ATM- and phosphorylation-dependent interaction with the MRN complex, composed of MRE11, RAD50, and NBN. In terms of processing, phosphorylation on undefined residues by PRKDC may stimulate endonucleolytic activity on 5' and 3' hairpins and overhangs. PRKDC must remain present, even after phosphorylation, for efficient hairpin opening. Also phosphorylated by ATM in response to ionizing radiation (IR) and by ATR in response to ultraviolet (UV) radiation.

It localises to the nucleus. Its function is as follows. Required for V(D)J recombination, the process by which exons encoding the antigen-binding domains of immunoglobulins and T-cell receptor proteins are assembled from individual V, (D), and J gene segments. V(D)J recombination is initiated by the lymphoid specific RAG endonuclease complex, which generates site specific DNA double strand breaks (DSBs). These DSBs present two types of DNA end structures: hairpin sealed coding ends and phosphorylated blunt signal ends. These ends are independently repaired by the non homologous end joining (NHEJ) pathway to form coding and signal joints respectively. This protein exhibits single-strand specific 5'-3' exonuclease activity in isolation, and acquires endonucleolytic activity on 5' and 3' hairpins and overhangs when in a complex with PRKDC. The latter activity is required specifically for the resolution of closed hairpins prior to the formation of the coding joint. May also be required for the repair of complex DSBs induced by ionizing radiation, which require substantial end-processing prior to religation by NHEJ. The sequence is that of Protein artemis (DCLRE1C) from Pongo abelii (Sumatran orangutan).